The chain runs to 141 residues: Hemoglobin subunit alpha-1/2 (141 aa).

In terms of domain architecture, Globin spans 1 to 141 (VLSPADKTNV…VSTVLTSKYR (141 aa)). The residue at position 3 (S3) is a Phosphoserine. K7 is subject to N6-succinyllysine. Phosphothreonine is present on T8. The residue at position 11 (K11) is an N6-succinyllysine. The residue at position 16 (K16) is an N6-acetyllysine; alternate. The residue at position 16 (K16) is an N6-succinyllysine; alternate. A Phosphotyrosine modification is found at Y24. K40 carries the post-translational modification N6-succinyllysine. S49 carries the post-translational modification Phosphoserine. H58 lines the O2 pocket. Heme b is bound at residue H87. S102 bears the Phosphoserine mark. T108 bears the Phosphothreonine mark. S124 carries the post-translational modification Phosphoserine. 2 positions are modified to phosphothreonine: T134 and T137. The residue at position 138 (S138) is a Phosphoserine.

Belongs to the globin family. As to quaternary structure, heterotetramer of two alpha chains and two beta chains. Red blood cells.

Involved in oxygen transport from the lung to the various peripheral tissues. This is Hemoglobin subunit alpha-1/2 from Leptonychotes weddellii (Weddell seal).